Consider the following 370-residue polypeptide: 4-hydroxy-3-methylbut-2-en-1-yl diphosphate synthase (flavodoxin) (370 aa).

[4Fe-4S] cluster-binding residues include cysteine 268, cysteine 271, cysteine 303, and glutamate 310.

The protein belongs to the IspG family. Requires [4Fe-4S] cluster as cofactor.

The catalysed reaction is (2E)-4-hydroxy-3-methylbut-2-enyl diphosphate + oxidized [flavodoxin] + H2O + 2 H(+) = 2-C-methyl-D-erythritol 2,4-cyclic diphosphate + reduced [flavodoxin]. It participates in isoprenoid biosynthesis; isopentenyl diphosphate biosynthesis via DXP pathway; isopentenyl diphosphate from 1-deoxy-D-xylulose 5-phosphate: step 5/6. Converts 2C-methyl-D-erythritol 2,4-cyclodiphosphate (ME-2,4cPP) into 1-hydroxy-2-methyl-2-(E)-butenyl 4-diphosphate. This chain is 4-hydroxy-3-methylbut-2-en-1-yl diphosphate synthase (flavodoxin), found in Bacillus pumilus (strain SAFR-032).